Consider the following 159-residue polypeptide: Cytochrome c-type biogenesis protein CcmE (159 aa).

Residues 1-23 (MSSQSFHNSPSLRVILKQRKKKR) are Cytoplasmic-facing. The chain crosses the membrane as a helical; Signal-anchor for type II membrane protein span at residues 24 to 44 (LLIVLFCCLIIAIATSLITYA). Residues 45 to 159 (LRNTVSFFRM…RLNKHHRVEK (115 aa)) are Periplasmic-facing. Positions 138 and 142 each coordinate heme.

This sequence belongs to the CcmE/CycJ family.

Its subcellular location is the cell inner membrane. Heme chaperone required for the biogenesis of c-type cytochromes. Transiently binds heme delivered by CcmC and transfers the heme to apo-cytochromes in a process facilitated by CcmF and CcmH. This Bartonella henselae (strain ATCC 49882 / DSM 28221 / CCUG 30454 / Houston 1) (Rochalimaea henselae) protein is Cytochrome c-type biogenesis protein CcmE.